The sequence spans 201 residues: Holliday junction branch migration complex subunit RuvA (201 aa).

Residues 1 to 64 (MFNSISGILS…EDQMRLFGFP (64 aa)) form a domain I region. Positions 65 to 140 (NQAERSLFLD…KLTNLNEVSS (76 aa)) are domain II. Residues 140–144 (SKGQA) form a flexible linker region. A domain III region spans residues 145–201 (SVSCEYEDIVTALTEMGFERKSVIVQVEKIAEEMKAAGSDPLKNEEELFRRSIVALS).

It belongs to the RuvA family. As to quaternary structure, homotetramer. Forms an RuvA(8)-RuvB(12)-Holliday junction (HJ) complex. HJ DNA is sandwiched between 2 RuvA tetramers; dsDNA enters through RuvA and exits via RuvB. An RuvB hexamer assembles on each DNA strand where it exits the tetramer. Each RuvB hexamer is contacted by two RuvA subunits (via domain III) on 2 adjacent RuvB subunits; this complex drives branch migration. In the full resolvosome a probable DNA-RuvA(4)-RuvB(12)-RuvC(2) complex forms which resolves the HJ.

The protein resides in the cytoplasm. In terms of biological role, the RuvA-RuvB-RuvC complex processes Holliday junction (HJ) DNA during genetic recombination and DNA repair, while the RuvA-RuvB complex plays an important role in the rescue of blocked DNA replication forks via replication fork reversal (RFR). RuvA specifically binds to HJ cruciform DNA, conferring on it an open structure. The RuvB hexamer acts as an ATP-dependent pump, pulling dsDNA into and through the RuvAB complex. HJ branch migration allows RuvC to scan DNA until it finds its consensus sequence, where it cleaves and resolves the cruciform DNA. The sequence is that of Holliday junction branch migration complex subunit RuvA from Treponema denticola (strain ATCC 35405 / DSM 14222 / CIP 103919 / JCM 8153 / KCTC 15104).